The sequence spans 327 residues: Ribose operon repressor (327 aa).

An HTH lacI-type domain is found at 1–56; it reads MTTIKQVALEAGVSKSTVSRFIAQNGYVSDEAREKIERAIKKLNFRPNLSAQSLKT. Residues 4 to 23 constitute a DNA-binding region (H-T-H motif); it reads IKQVALEAGVSKSTVSRFIA.

Its function is as follows. Transcriptional repressor for the ribose rbsDACBK operon. The protein is Ribose operon repressor (rbsR) of Lactococcus lactis subsp. lactis (strain IL1403) (Streptococcus lactis).